A 320-amino-acid chain; its full sequence is Homoserine kinase (320 aa).

100–110 (PLSSGMGSSAA) contributes to the ATP binding site.

Belongs to the GHMP kinase family. Homoserine kinase subfamily.

It localises to the cytoplasm. It carries out the reaction L-homoserine + ATP = O-phospho-L-homoserine + ADP + H(+). It functions in the pathway amino-acid biosynthesis; L-threonine biosynthesis; L-threonine from L-aspartate: step 4/5. In terms of biological role, catalyzes the ATP-dependent phosphorylation of L-homoserine to L-homoserine phosphate. The chain is Homoserine kinase from Chlorobium phaeovibrioides (strain DSM 265 / 1930) (Prosthecochloris vibrioformis (strain DSM 265)).